The following is a 339-amino-acid chain: NADH-quinone oxidoreductase subunit H (339 aa).

9 helical membrane passes run 10 to 30 (FPLTVIALKVVAITIPLILCV), 50 to 70 (PNVVGPFGLLQPIADAVKLLF), 82 to 102 (ILFILAPIITFVLSLIGWAVI), 115 to 135 (VGVLYILAISSLSVYGIIIAG), 161 to 181 (MGLVIITVLLTTGTLNLSGII), 187 to 207 (LPWWIDLMLLPMSIVFFISVL), 235 to 255 (MGFALFFLGEYANMILVSAMT), 275 to 295 (IPGFFWFVFKVGFLLFCFLWI), and 311 to 331 (GWKVFLPFTLFGVVLVSSVLF).

This sequence belongs to the complex I subunit 1 family. As to quaternary structure, NDH-1 is composed of 14 different subunits. Subunits NuoA, H, J, K, L, M, N constitute the membrane sector of the complex.

The protein localises to the cell inner membrane. It catalyses the reaction a quinone + NADH + 5 H(+)(in) = a quinol + NAD(+) + 4 H(+)(out). Functionally, NDH-1 shuttles electrons from NADH, via FMN and iron-sulfur (Fe-S) centers, to quinones in the respiratory chain. The immediate electron acceptor for the enzyme in this species is believed to be ubiquinone. Couples the redox reaction to proton translocation (for every two electrons transferred, four hydrogen ions are translocated across the cytoplasmic membrane), and thus conserves the redox energy in a proton gradient. This subunit may bind ubiquinone. The protein is NADH-quinone oxidoreductase subunit H of Rickettsia prowazekii (strain Madrid E).